A 422-amino-acid polypeptide reads, in one-letter code: 4-hydroxy-3-methylbut-2-en-1-yl diphosphate synthase (flavodoxin) (422 aa).

Positions 316, 319, 362, and 369 each coordinate [4Fe-4S] cluster.

The protein belongs to the IspG family. [4Fe-4S] cluster serves as cofactor.

It catalyses the reaction (2E)-4-hydroxy-3-methylbut-2-enyl diphosphate + oxidized [flavodoxin] + H2O + 2 H(+) = 2-C-methyl-D-erythritol 2,4-cyclic diphosphate + reduced [flavodoxin]. The protein operates within isoprenoid biosynthesis; isopentenyl diphosphate biosynthesis via DXP pathway; isopentenyl diphosphate from 1-deoxy-D-xylulose 5-phosphate: step 5/6. In terms of biological role, converts 2C-methyl-D-erythritol 2,4-cyclodiphosphate (ME-2,4cPP) into 1-hydroxy-2-methyl-2-(E)-butenyl 4-diphosphate. The sequence is that of 4-hydroxy-3-methylbut-2-en-1-yl diphosphate synthase (flavodoxin) from Ehrlichia ruminantium (strain Gardel).